A 382-amino-acid chain; its full sequence is Mannitol-1-phosphate 5-dehydrogenase (382 aa).

Valine 3–glycine 14 lines the NAD(+) pocket.

The protein belongs to the mannitol dehydrogenase family.

The catalysed reaction is D-mannitol 1-phosphate + NAD(+) = beta-D-fructose 6-phosphate + NADH + H(+). In Sodalis glossinidius (strain morsitans), this protein is Mannitol-1-phosphate 5-dehydrogenase.